Consider the following 299-residue polypeptide: Oxygen-dependent coproporphyrinogen-III oxidase (299 aa).

Residue Ser92 participates in substrate binding. 2 residues coordinate a divalent metal cation: His96 and His106. The active-site Proton donor is His106. Position 108–110 (Asn108–Arg110) interacts with substrate. A divalent metal cation-binding residues include His145 and His175. An important for dimerization region spans residues Tyr240–Glu275. Gly258–Arg260 lines the substrate pocket.

Belongs to the aerobic coproporphyrinogen-III oxidase family. Homodimer. A divalent metal cation is required as a cofactor.

Its subcellular location is the cytoplasm. It carries out the reaction coproporphyrinogen III + O2 + 2 H(+) = protoporphyrinogen IX + 2 CO2 + 2 H2O. It functions in the pathway porphyrin-containing compound metabolism; protoporphyrin-IX biosynthesis; protoporphyrinogen-IX from coproporphyrinogen-III (O2 route): step 1/1. In terms of biological role, involved in the heme biosynthesis. Catalyzes the aerobic oxidative decarboxylation of propionate groups of rings A and B of coproporphyrinogen-III to yield the vinyl groups in protoporphyrinogen-IX. This Salmonella arizonae (strain ATCC BAA-731 / CDC346-86 / RSK2980) protein is Oxygen-dependent coproporphyrinogen-III oxidase.